The primary structure comprises 713 residues: Macrophage-expressed gene 1 protein (713 aa).

A signal peptide spans 1–19 (MNSFMALVLIWMIIACAEA). Residues 30–345 (GFQICKNALK…TAVRHYYTFN (316 aa)) enclose the MACPF domain. An intrachain disulfide couples C34 to C70. 2 beta stranded membrane-spanning segments follow: residues 113 to 120 (LSINTELA) and 127 to 132 (GKFSTE). N185 carries an N-linked (GlcNAc...) asparagine glycan. 2 beta stranded membrane passes run 235 to 244 (TVTASAGIAF) and 248 to 256 (VNFKVETDY). N269 is a glycosylation site (N-linked (GlcNAc...) asparagine). C350 and C369 are joined by a disulfide. N-linked (GlcNAc...) asparagine glycosylation occurs at N375. Intrachain disulfides connect C385/C394, C432/C446, C436/C442, C531/C569, and C554/C574. Positions 410 to 653 (PPGYSPVHLL…GDSNGMSGGE (244 aa)) are P2. Residues 654–674 (AAGITLGVTIALGIVITLAIY) traverse the membrane as a helical segment.

It belongs to the MPEG1 family. Homooligomer; predominantly forms a homooligomeric arc-shaped pore complex instead of complete rings of 16 subunits. Post-translationally, proteolytically processed in two steps to generate the Macrophage-expressed gene 1 protein, processed form: cleaved by trypsin in proximity of the helical transmembrane domain releases the ectodomain into the lysosomal lumen to orient the pore-forming domain toward the endogenous membranes, and processed by the asparagine endopeptidase (LGMN). Proteolytic processing in antigen-containing vesicles is pH-dependent. Monoubiquitinated in response to bacterial infection; ubiquitination is required for vesicular localization and antibacterial activity and can be blocked by bacterial cell cycle inhibiting factor (cif). Expressed constitutively in a variety of cell types including macrophages, microglia, neutrophils, T cells, marginal zone B cells, keratinocytes, splenocytes and intestinal epithelial cells.

It localises to the cytoplasmic vesicle membrane. It is found in the cytoplasmic vesicle. The protein resides in the phagosome membrane. With respect to regulation, forms arc- and ring-shaped pre-pores on top of the membrane at neutral to slightly acidic pH conditions and converts to pores upon acidification. Undergoes transition from the pre-pore to the pore in a processive clockwise hand-over-hand process. In the pore state, 2 alpha-helical regions refold into transmembrane hairpins (TMH1 and TMH2) in each protomer that form in the ensemble complex giant beta-barrel transmembrane pores. In terms of biological role, pore-forming protein involved in both innate and adaptive immunity. Plays a central role in antigen cross-presentation in dendritic cells by forming a pore in antigen-containing compartments, thereby promoting delivery of antigens for cross-presentation. Also involved in innate immune response following bacterial infection; shows antibacterial activity against a wide spectrum of Gram-positive, Gram-negative and acid-fast bacteria. Reduces the viability of the intracytosolic pathogen L.monocytogenes by inhibiting acidification of the phagocytic vacuole of host cells which restricts bacterial translocation from the vacuole to the cytosol. Required for the antibacterial activity of reactive oxygen species and nitric oxide. Pore-forming protein that plays a central role in antigen cross-presentation in dendritic cells by mediating delivery of antigens for cross-presentation. Dendritic cells bridge innate and adaptive immunity by capturing exogenous antigens on MHC class-I molecules and presenting them to naive CD8(+) T-cells. Acts by forming a pore in antigen-containing compartments, promoting the release of antigens into the cytosol, enabling generation of MHCI:peptide complexes and T-cell priming. The polypeptide is Macrophage-expressed gene 1 protein (Mus musculus (Mouse)).